The following is a 313-amino-acid chain: Olfactory receptor 1f45 (313 aa).

Topologically, residues 1-25 (MSSTNQSSVTEFLLLGLSRQPQQQQ) are extracellular. Asn-5 carries N-linked (GlcNAc...) asparagine glycosylation. The chain crosses the membrane as a helical span at residues 26-50 (LLFLLFLIMYLATVLGNLLIILAIG). Residues 51–57 (TDSRLHT) lie on the Cytoplasmic side of the membrane. Residues 58–79 (PMYFFLSNLSFVDVCFSSTTVP) traverse the membrane as a helical segment. At 80 to 100 (KVLANHILGSQAISFSGCLTQ) the chain is on the extracellular side. Cys-97 and Cys-189 are joined by a disulfide. The helical transmembrane segment at 101-120 (LYFLAVFGNMDNFLLAVMSY) threads the bilayer. At 121–139 (DRFVAICHPLHYTTKMTRQ) the chain is on the cytoplasmic side. Residues 140–158 (LCVLLVVGSWVVANMNCLL) traverse the membrane as a helical segment. The Extracellular portion of the chain corresponds to 159 to 196 (HILLMARLSFCADNMIPHFFCDGTPLLKLSCSDTHLNE). A helical membrane pass occupies residues 197–219 (LMILTEGAVVMVTPFVCILISYI). The Cytoplasmic portion of the chain corresponds to 220–236 (HITCAVLRVSSPRGGWK). Residues 237 to 260 (SFSTCGSHLAVVCLFYGTVIAVYF) form a helical membrane-spanning segment. Residues 261-272 (NPSSSHLAGRDM) are Extracellular-facing. The helical transmembrane segment at 273–292 (AAAVMYAVVTPMLNPFIYSL) threads the bilayer. Residues 293–313 (RNSDMKAALRKVLAMRFPSKQ) are Cytoplasmic-facing.

The protein belongs to the G-protein coupled receptor 1 family. In terms of tissue distribution, olfactory epithelium.

The protein resides in the cell membrane. Functionally, odorant receptor. The chain is Olfactory receptor 1f45 (Or1f45) from Rattus norvegicus (Rat).